The following is a 703-amino-acid chain: Meiotic coiled-coil protein 2 (703 aa).

2 stretches are compositionally biased toward polar residues: residues 1-19 and 245-258; these read MQSIDLRLPSTSANHSISE and TNVRYSNSKPSTPL. Disordered stretches follow at residues 1-29, 245-265, and 284-309; these read MQSIDLRLPSTSANHSISESLEHSKSELN, TNVRYSNSKPSTPLSPEDVDL, and ASTNNLSTNTSGTLKPYSLSSSRSSS. One can recognise a PUM-HD domain in the interval 331–686; the sequence is NPSVIPESTS…KVAYLVEKWN (356 aa). 8 Pumilio repeats span residues 361–396, 397–432, 433–468, 469–504, 509–544, 545–580, 581–616, and 625–660; these read NVIIDKIIVSNDQQSSIFLQQKLKISSYDMKQNIVD, SIISQIHPLMLNRFGNFLVQRCFEHGTAPQIRQMGS, AMLGNMLKLATDPFGCHVVQKAIDNVTEDIKLAMMD, ELFLTIDVTIMHHYACHVWQKLFETQWYEYPVNVMN, ALRGKWHEVAVGENGSLVVQNMFENCVEKDKRECIE, EIIFHLDGIARGQWGNWVVQHMVENGQGEDLKRVID, ALLNRAVEFSIDQFASKVIEKAIKSGPKNFISLYLK, and RTRQPLIDIASDQYGNYLIQQIIQLGQPAEKNLVIT.

This is Meiotic coiled-coil protein 2 (mcp2) from Schizosaccharomyces pombe (strain 972 / ATCC 24843) (Fission yeast).